The chain runs to 224 residues: Glutamate/aspartate import permease protein GltK (224 aa).

Over methionine 1 to glycine 19 the chain is Periplasmic. A helical transmembrane segment spans residues leucine 20–methionine 40. The 197-residue stretch at leucine 20 to valine 216 folds into the ABC transmembrane type-1 domain. At leucine 41–proline 67 the chain is on the cytoplasmic side. Residues leucine 68 to glycine 88 traverse the membrane as a helical segment. Residues leucine 89 to aspartate 94 lie on the Periplasmic side of the membrane. Residues isoleucine 95 to tyrosine 112 traverse the membrane as a helical segment. At serine 113–methionine 154 the chain is on the cytoplasmic side. Residues valine 155–leucine 175 form a helical membrane-spanning segment. The Periplasmic segment spans residues serine 176–glutamate 196. The helical transmembrane segment at methionine 197–serine 217 threads the bilayer. At tyrosine 218–alanine 224 the chain is on the cytoplasmic side.

The protein belongs to the binding-protein-dependent transport system permease family. HisMQ subfamily. In terms of assembly, the complex is composed of two ATP-binding proteins (GltL), two transmembrane proteins (GltJ and GltK) and a solute-binding protein (GltI).

The protein resides in the cell inner membrane. Its function is as follows. Part of the ABC transporter complex GltIJKL involved in glutamate and aspartate uptake. Probably responsible for the translocation of the substrate across the membrane. The sequence is that of Glutamate/aspartate import permease protein GltK (gltK) from Escherichia coli O157:H7.